We begin with the raw amino-acid sequence, 560 residues long: S100P-binding protein (560 aa).

Disordered regions lie at residues Ser259–Pro292 and Ser313–Phe400. A compositionally biased stretch (polar residues) spans Ser313–Lys352. Residues Gln378–Pro387 show a composition bias toward basic and acidic residues.

It is found in the nucleus. The chain is S100P-binding protein (s100pbp) from Xenopus laevis (African clawed frog).